The primary structure comprises 347 residues: DNA-directed RNA polymerase subunit alpha (347 aa).

The alpha N-terminal domain (alpha-NTD) stretch occupies residues 1-243; the sequence is MLIKQGDRLI…DQISVFINFD (243 aa). The tract at residues 260-347 is alpha C-terminal domain (alpha-CTD); the sequence is FNEHLFKSID…EWKRKQQHEA (88 aa).

Belongs to the RNA polymerase alpha chain family. In terms of assembly, homodimer. The RNAP catalytic core consists of 2 alpha, 1 beta, 1 beta' and 1 omega subunit. When a sigma factor is associated with the core the holoenzyme is formed, which can initiate transcription.

The catalysed reaction is RNA(n) + a ribonucleoside 5'-triphosphate = RNA(n+1) + diphosphate. DNA-dependent RNA polymerase catalyzes the transcription of DNA into RNA using the four ribonucleoside triphosphates as substrates. The sequence is that of DNA-directed RNA polymerase subunit alpha from Nitratidesulfovibrio vulgaris (strain ATCC 29579 / DSM 644 / CCUG 34227 / NCIMB 8303 / VKM B-1760 / Hildenborough) (Desulfovibrio vulgaris).